The primary structure comprises 96 residues: MNYVKIIEKNKNFIELELVNDDHSLSNLVKEILLAKDGVILASYGVEHPVLDPDTGRYISNPTIMLKTDEKTDAETVLKEALKDIVDLCNKTLEDL.

The protein belongs to the archaeal Rpo11/eukaryotic RPB11/RPC19 RNA polymerase subunit family. Part of the RNA polymerase complex.

It is found in the cytoplasm. It carries out the reaction RNA(n) + a ribonucleoside 5'-triphosphate = RNA(n+1) + diphosphate. In terms of biological role, DNA-dependent RNA polymerase (RNAP) catalyzes the transcription of DNA into RNA using the four ribonucleoside triphosphates as substrates. The chain is DNA-directed RNA polymerase subunit Rpo11 from Methanococcus maripaludis (strain DSM 14266 / JCM 13030 / NBRC 101832 / S2 / LL).